A 281-amino-acid chain; its full sequence is 4-deoxy-L-threo-5-hexosulose-uronate ketol-isomerase (281 aa).

Positions 198, 200, 205, and 248 each coordinate Zn(2+).

This sequence belongs to the KduI family. Requires Zn(2+) as cofactor.

It carries out the reaction 5-dehydro-4-deoxy-D-glucuronate = 3-deoxy-D-glycero-2,5-hexodiulosonate. The protein operates within glycan metabolism; pectin degradation; 2-dehydro-3-deoxy-D-gluconate from pectin: step 4/5. Its function is as follows. Catalyzes the isomerization of 5-dehydro-4-deoxy-D-glucuronate to 3-deoxy-D-glycero-2,5-hexodiulosonate. The protein is 4-deoxy-L-threo-5-hexosulose-uronate ketol-isomerase of Levilactobacillus brevis (strain ATCC 367 / BCRC 12310 / CIP 105137 / JCM 1170 / LMG 11437 / NCIMB 947 / NCTC 947) (Lactobacillus brevis).